Here is a 123-residue protein sequence, read N- to C-terminus: Fluoride-specific ion channel FluC (123 aa).

A run of 4 helical transmembrane segments spans residues 5–25 (VWVA…YKFV), 33–53 (LATF…IGAF), 62–82 (LKLA…TFAA), and 94–114 (ITAF…VALG). 2 residues coordinate Na(+): Gly-72 and Ser-75.

The protein belongs to the fluoride channel Fluc/FEX (TC 1.A.43) family.

The protein resides in the cell inner membrane. The enzyme catalyses fluoride(in) = fluoride(out). Its activity is regulated as follows. Na(+) is not transported, but it plays an essential structural role and its presence is essential for fluoride channel function. Functionally, fluoride-specific ion channel. Important for reducing fluoride concentration in the cell, thus reducing its toxicity. In Ignicoccus hospitalis (strain KIN4/I / DSM 18386 / JCM 14125), this protein is Fluoride-specific ion channel FluC.